We begin with the raw amino-acid sequence, 516 residues long: Lysine--tRNA ligase (516 aa).

The interval 1–23 (MTEPNRAQAAPASPTAELPAADE) is disordered. Mg(2+)-binding residues include glutamate 426 and glutamate 433.

Belongs to the class-II aminoacyl-tRNA synthetase family. In terms of assembly, homodimer. Mg(2+) serves as cofactor.

It localises to the cytoplasm. The catalysed reaction is tRNA(Lys) + L-lysine + ATP = L-lysyl-tRNA(Lys) + AMP + diphosphate. This is Lysine--tRNA ligase from Cupriavidus pinatubonensis (strain JMP 134 / LMG 1197) (Cupriavidus necator (strain JMP 134)).